A 115-amino-acid polypeptide reads, in one-letter code: Cobalt-zinc-cadmium resistance protein CzcI (115 aa).

An N-terminal signal peptide occupies residues 1–20 (MRRFVLIFVLLILPFQFSWA). Positions 93–102 (QHSSEFSSLN) are enriched in polar residues. Residues 93–115 (QHSSEFSSLNARAPDRPQWQRLA) form a disordered region.

It localises to the periplasm. Component of the czc cation-efflux system that confers resistance to cobalt, zinc and cadmium. May have a regulatory function. This is Cobalt-zinc-cadmium resistance protein CzcI (czcI) from Cupriavidus metallidurans (strain ATCC 43123 / DSM 2839 / NBRC 102507 / CH34) (Ralstonia metallidurans).